A 370-amino-acid polypeptide reads, in one-letter code: tRNA-specific 2-thiouridylase MnmA (370 aa).

Residues 12-19 (GMSGGVDS) and Leu38 contribute to the ATP site. The active-site Nucleophile is Cys105. Cys105 and Cys204 are joined by a disulfide. Residue Gly129 participates in ATP binding. Residues 153 to 155 (KDQ) form an interaction with tRNA region. Cys204 (cysteine persulfide intermediate) is an active-site residue. An interaction with tRNA region spans residues 310–311 (RY).

Belongs to the MnmA/TRMU family.

The protein localises to the cytoplasm. The catalysed reaction is S-sulfanyl-L-cysteinyl-[protein] + uridine(34) in tRNA + AH2 + ATP = 2-thiouridine(34) in tRNA + L-cysteinyl-[protein] + A + AMP + diphosphate + H(+). Functionally, catalyzes the 2-thiolation of uridine at the wobble position (U34) of tRNA, leading to the formation of s(2)U34. This is tRNA-specific 2-thiouridylase MnmA from Desulfitobacterium hafniense (strain Y51).